Here is a 499-residue protein sequence, read N- to C-terminus: Sensor histidine kinase PdtaS (499 aa).

Residues 4 to 149 (LGDLLAEHTM…PLEGAYLDCA (146 aa)) form a GAF region. The interval 178–289 (DGFIRLNEGG…TEVKRRDRAL (112 aa)) is PAS-like. The Histidine kinase domain occupies 298-493 (EIHHRVKNNL…DVVLRVPIGR (196 aa)). His301 is modified (phosphohistidine; by autocatalysis).

In terms of processing, autophosphorylated.

It localises to the cytoplasm. The enzyme catalyses ATP + protein L-histidine = ADP + protein N-phospho-L-histidine.. In terms of biological role, member of the two-component regulatory system PdtaR/PdtaS. This two-component system plays an essential role in mycobacterial adaptation to poor nutrient conditions. Nutrient deprivation results in increasing intracellular concentrations of cyclic diguanosine monophosphate (c-di-GMP), which binds to the PdtaS sensor and promotes its autophosphorylation, leading to the activation of the signaling cascade. The phosphate group is then transferred to PdtaR. The protein is Sensor histidine kinase PdtaS of Mycolicibacterium smegmatis (strain ATCC 700084 / mc(2)155) (Mycobacterium smegmatis).